The sequence spans 343 residues: Heat-inducible transcription repressor HrcA (343 aa).

Belongs to the HrcA family.

Its function is as follows. Negative regulator of class I heat shock genes (grpE-dnaK-dnaJ and groELS operons). Prevents heat-shock induction of these operons. This Mycobacterium ulcerans (strain Agy99) protein is Heat-inducible transcription repressor HrcA.